An 874-amino-acid chain; its full sequence is Probable cation-transporting P-type ATPase (874 aa).

Topologically, residues 1-41 are cytoplasmic; the sequence is MNSWTGLSEQAAIKSRQEHGANFLPEKKATPFWLLFLQQFK. The helical transmembrane segment at 42–62 threads the bilayer; sequence SLVVILLLLASLLSFVVAIVS. Residues 63 to 79 lie on the Extracellular side of the membrane; it reads GLRSNWNFNHDLIIEWV. Residues 80-100 form a helical membrane-spanning segment; the sequence is QPFIILLTVFANSLIGSIQEF. Residues 101-237 lie on the Cytoplasmic side of the membrane; the sequence is KAQKSASALK…TKLSPLQQKL (137 aa). A helical transmembrane segment spans residues 238–257; it reads EKIGKWFSWFGLGLFAVVFL. Over 258–275 the chain is Extracellular; it reads VQTALLGFDNFTNNWSIA. Residues 276–293 form a helical membrane-spanning segment; that stretch reads LIGAIALVVAIIPEGLVT. At 294-644 the chain is on the cytoplasmic side; sequence FINVIFALSV…EEGRKTFLTC (351 aa). Residue Asp331 is the 4-aspartylphosphate intermediate of the active site. Mg(2+)-binding residues include Asp589 and Asp593. Residues 645 to 664 traverse the membrane as a helical segment; the sequence is KRVLLNLFLTSIAGTVVVLL. Residues 665 to 687 lie on the Extracellular side of the membrane; sequence GLFILGQVFKTNLLQQGHDFQVF. The helical transmembrane segment at 688-708 threads the bilayer; that stretch reads SPTQLLIINLFVHGFPAVALA. Over 709 to 726 the chain is Cytoplasmic; sequence VQPVKEKLMVGSFSTKNL. Residues 727-749 traverse the membrane as a helical segment; that stretch reads FYNRQGFDLIWQSLFLSFLTLLF. The Extracellular segment spans residues 750-770; the sequence is YSLGIIYAINNRDLQTSGDLI. A helical transmembrane segment spans residues 771 to 790; it reads NRAGSTCGFFILGASAALNS. The Cytoplasmic portion of the chain corresponds to 791–803; it reads LNLMVDKPLLMTN. Residues 804–826 form a helical membrane-spanning segment; sequence PWFFKLVWIGSLASILVFLLIIF. The Extracellular segment spans residues 827 to 844; it reads INPLGLVFNVLQDLTNHP. The chain crosses the membrane as a helical span at residues 845-865; sequence VLISYSFGGVILYMGMNEVVK. Topologically, residues 866–874 are cytoplasmic; it reads LIRLGYGNI.

This sequence belongs to the cation transport ATPase (P-type) (TC 3.A.3) family. Type II subfamily.

Its subcellular location is the cell membrane. The enzyme catalyses ATP + H2O = ADP + phosphate + H(+). In terms of biological role, could mediate calcium influx. The chain is Probable cation-transporting P-type ATPase (pacL) from Mycoplasma genitalium (strain ATCC 33530 / DSM 19775 / NCTC 10195 / G37) (Mycoplasmoides genitalium).